Here is a 157-residue protein sequence, read N- to C-terminus: Glycine-rich RNA-binding, abscisic acid-inducible protein (157 aa).

The RRM domain occupies Y8–S86. The segment at N82–D157 is disordered. Gly residues predominate over residues R87–D157.

Its function is as follows. Possibly has a role in RNA transcription or processing during stress. In Zea mays (Maize), this protein is Glycine-rich RNA-binding, abscisic acid-inducible protein (RAB15).